We begin with the raw amino-acid sequence, 179 residues long: NADH-quinone oxidoreductase subunit I (179 aa).

4Fe-4S ferredoxin-type domains lie at Arg-45–Ala-74 and Lys-90–Glu-119. The [4Fe-4S] cluster site is built by Cys-54, Cys-57, Cys-60, Cys-64, Cys-99, Cys-102, Cys-105, and Cys-109. The interval Pro-146–Arg-179 is disordered. Basic and acidic residues predominate over residues Pro-168–Arg-179.

It belongs to the complex I 23 kDa subunit family. As to quaternary structure, NDH-1 is composed of 15 different subunits. Subunits NuoA, H, J, K, L, M, N constitute the membrane sector of the complex. [4Fe-4S] cluster is required as a cofactor.

It localises to the cell membrane. The catalysed reaction is a quinone + NADH + 5 H(+)(in) = a quinol + NAD(+) + 4 H(+)(out). NDH-1 shuttles electrons from NADH, via FMN and iron-sulfur (Fe-S) centers, to quinones in the respiratory chain. The immediate electron acceptor for the enzyme in this species is believed to be ubiquinone. Couples the redox reaction to proton translocation (for every two electrons transferred, four hydrogen ions are translocated across the cytoplasmic membrane), and thus conserves the redox energy in a proton gradient. The polypeptide is NADH-quinone oxidoreductase subunit I (Deinococcus geothermalis (strain DSM 11300 / CIP 105573 / AG-3a)).